Reading from the N-terminus, the 282-residue chain is Putative sugar uptake protein lp_2594 (282 aa).

The next 10 helical transmembrane spans lie at 2 to 21, 31 to 48, 53 to 75, 90 to 112, 119 to 136, 146 to 163, 176 to 194, 209 to 226, 233 to 252, and 262 to 281; these read IFLI…LLVG, MFGM…FWLF, VTIS…IGQL, MPIS…FGEW, ILGL…ALSA, FSCY…WIYS, LFLP…WAIY, TLPG…ILSA, NAYI…GLFF, and IVSV…TTAL.

This sequence belongs to the GRP transporter (TC 2.A.7.5) family.

The protein resides in the cell membrane. In Lactiplantibacillus plantarum (strain ATCC BAA-793 / NCIMB 8826 / WCFS1) (Lactobacillus plantarum), this protein is Putative sugar uptake protein lp_2594.